We begin with the raw amino-acid sequence, 191 residues long: Peptidyl-tRNA hydrolase (191 aa).

Tyr-14 is a tRNA binding site. Catalysis depends on His-19, which acts as the Proton acceptor. Residues Tyr-64, Asn-66, and Asn-112 each contribute to the tRNA site.

It belongs to the PTH family. In terms of assembly, monomer.

The protein localises to the cytoplasm. It carries out the reaction an N-acyl-L-alpha-aminoacyl-tRNA + H2O = an N-acyl-L-amino acid + a tRNA + H(+). Hydrolyzes ribosome-free peptidyl-tRNAs (with 1 or more amino acids incorporated), which drop off the ribosome during protein synthesis, or as a result of ribosome stalling. Functionally, catalyzes the release of premature peptidyl moieties from peptidyl-tRNA molecules trapped in stalled 50S ribosomal subunits, and thus maintains levels of free tRNAs and 50S ribosomes. The polypeptide is Peptidyl-tRNA hydrolase (Clostridium beijerinckii (strain ATCC 51743 / NCIMB 8052) (Clostridium acetobutylicum)).